Here is a 481-residue protein sequence, read N- to C-terminus: Zinc metalloproteinase/disintegrin (481 aa).

The first 20 residues, 1–20, serve as a signal peptide directing secretion; the sequence is MIQVLLVTICLAVFPYQGSS. A propeptide spanning residues 21–190 is cleaved from the precursor; it reads IILESGNVDD…KASQLYLTPE (170 aa). The region spanning 197–392 is the Peptidase M12B domain; that stretch reads RYIKLAIVVD…DNPQCILNAP (196 aa). 3 disulfide bridges follow: cysteine 308/cysteine 387, cysteine 349/cysteine 371, and cysteine 351/cysteine 354. Zn(2+) is bound at residue histidine 333. Glutamate 334 is an active-site residue. Zn(2+) is bound by residues histidine 337 and histidine 343. A propeptide spanning residues 393–408 is cleaved from the precursor; that stretch reads LRTDTVSTPVSGNEFL. Positions 400-481 constitute a Disintegrin domain; that stretch reads TPVSGNEFLE…ADCPRNGLYS (82 aa). Disulfide bonds link cysteine 414-cysteine 429, cysteine 416-cysteine 424, cysteine 423-cysteine 446, cysteine 437-cysteine 443, cysteine 442-cysteine 467, and cysteine 455-cysteine 474. The short motif at 459–461 is the Cell attachment site element; sequence RGD.

It belongs to the venom metalloproteinase (M12B) family. P-II subfamily. P-IIa sub-subfamily. In terms of assembly, monomer. Zn(2+) serves as cofactor. As to expression, expressed by the venom gland.

The protein resides in the secreted. Its function is as follows. Impairs hemostasis in the envenomed animal. Inhibits platelet aggregation induced by ADP, thrombin, platelet-activating factor and collagen. Acts by inhibiting fibrinogen interaction with platelet receptors GPIIb/GPIIIa (ITGA2B/ITGB3). This Protobothrops elegans (Elegant pitviper) protein is Zinc metalloproteinase/disintegrin.